Consider the following 394-residue polypeptide: uncharacterized protein (394 aa).

Phosphoserine is present on residues serine 117 and serine 121. Disordered stretches follow at residues 177–295 (DSDE…PGTF), 315–347 (KRSIMLPQDIDPTFPDSEPEDDGHASSTVGSLS), and 370–394 (SSEVLRNSKSPPLDIARKAVGAHRV). A compositionally biased stretch (acidic residues) spans 178–190 (SDEEDEVDDEEIE). Composition is skewed to polar residues over residues 191-207 (SFNSFSRKMQTISNSRY) and 216-230 (EKQSCSSESDRVSQI). 2 stretches are compositionally biased toward acidic residues: residues 231–263 (SDDEEDEEGSADEEDEEDSDVELSESSLSDDED) and 284–295 (IPDDTDFVPGTF). The span at 370–379 (SSEVLRNSKS) shows a compositional bias: polar residues. Serine 379 bears the Phosphoserine mark.

The protein localises to the nucleus. This is an uncharacterized protein from Schizosaccharomyces pombe (strain 972 / ATCC 24843) (Fission yeast).